A 191-amino-acid chain; its full sequence is MKTLLKSIKITLVFCVFFSVFYILVLWLFAQVAGPNRGNAEVVTLNGKVVGAANVGQTFTEEKYFWGRPSCAGDGYDATSSAGSNKGPTNPEYLAEVEARIDTFLIHHPYLARKDVPAEMVTASASGLDPDITPQSAYVQVKRVAQARGMDVEEVRRVVDKAVEKPLLGIFGTEKVNVLKLNIALEELKNR.

The helical transmembrane segment at 10–30 threads the bilayer; that stretch reads ITLVFCVFFSVFYILVLWLFA.

It belongs to the KdpC family. In terms of assembly, the system is composed of three essential subunits: KdpA, KdpB and KdpC.

It localises to the cell inner membrane. Functionally, part of the high-affinity ATP-driven potassium transport (or Kdp) system, which catalyzes the hydrolysis of ATP coupled with the electrogenic transport of potassium into the cytoplasm. This subunit acts as a catalytic chaperone that increases the ATP-binding affinity of the ATP-hydrolyzing subunit KdpB by the formation of a transient KdpB/KdpC/ATP ternary complex. This is Potassium-transporting ATPase KdpC subunit from Bacteroides fragilis (strain YCH46).